The chain runs to 60 residues: MAVPARHTSKAKKNKRRTHYKLTAPSVKFDETTGDYSRSHRVSLKGYYKGHKIAKANAAE.

The segment at 1–23 is disordered; the sequence is MAVPARHTSKAKKNKRRTHYKLT. The segment covering 7–20 has biased composition (basic residues); sequence HTSKAKKNKRRTHY.

Belongs to the bacterial ribosomal protein bL32 family.

This Streptococcus equi subsp. equi (strain 4047) protein is Large ribosomal subunit protein bL32.